The sequence spans 39 residues: Glutenin, high molecular weight subunit PC237 (39 aa).

This sequence belongs to the gliadin/glutenin family. In terms of assembly, disulfide-bridge linked aggregates.

Functionally, glutenins are high-molecular weight seed storage proteins of wheat endosperm. Thought to be responsible for the visco-elastic property of wheat dough. This is Glutenin, high molecular weight subunit PC237 from Triticum aestivum (Wheat).